We begin with the raw amino-acid sequence, 132 residues long: Large-conductance mechanosensitive channel (132 aa).

3 helical membrane passes run 14 to 34, 38 to 58, and 67 to 87; these read VVDL…VSSL, IITP…LHFG, and GNFI…FMFV.

Belongs to the MscL family. As to quaternary structure, homopentamer.

Its subcellular location is the cell membrane. In terms of biological role, channel that opens in response to stretch forces in the membrane lipid bilayer. May participate in the regulation of osmotic pressure changes within the cell. The protein is Large-conductance mechanosensitive channel of Bacillus cereus (strain ATCC 10987 / NRS 248).